A 323-amino-acid polypeptide reads, in one-letter code: Beta-ketoacyl-[acyl-carrier-protein] synthase III (323 aa).

Active-site residues include Cys114 and His250. Residues 251–255 (QANIR) are ACP-binding. Residue Asn280 is part of the active site.

The protein belongs to the thiolase-like superfamily. FabH family. As to quaternary structure, homodimer.

The protein resides in the cytoplasm. It catalyses the reaction malonyl-[ACP] + acetyl-CoA + H(+) = 3-oxobutanoyl-[ACP] + CO2 + CoA. The protein operates within lipid metabolism; fatty acid biosynthesis. Functionally, catalyzes the condensation reaction of fatty acid synthesis by the addition to an acyl acceptor of two carbons from malonyl-ACP. Catalyzes the first condensation reaction which initiates fatty acid synthesis and may therefore play a role in governing the total rate of fatty acid production. Possesses both acetoacetyl-ACP synthase and acetyl transacylase activities. Its substrate specificity determines the biosynthesis of branched-chain and/or straight-chain of fatty acids. The sequence is that of Beta-ketoacyl-[acyl-carrier-protein] synthase III from Ruegeria sp. (strain TM1040) (Silicibacter sp.).